A 971-amino-acid polypeptide reads, in one-letter code: Reversion-inducing cysteine-rich protein with Kazal motifs (971 aa).

The N-terminal stretch at 1–22 (MASVRASPRSALLLLLAAAGVA) is a signal peptide. The stretch at 37–84 (CCNHSKDNQMCRDVCEQIFSSKSESRLKHLLQRAPDYCPETMVEIWSC) is one Knot 1 repeat. Positions 37–338 (CCNHSKDNQM…NPVEVSMLTC (302 aa)) are 5 X Knot repeats. Residues asparagine 39 and asparagine 86 are each glycosylated (N-linked (GlcNAc...) asparagine). Knot repeat units lie at residues 104–141 (CCEL…LFSC) and 151–197 (CCSY…LIHC). N-linked (GlcNAc...) asparagine glycosylation occurs at asparagine 200. Knot repeat units lie at residues 216–263 (CCDR…LWQC) and 292–338 (CCSK…MLTC). 2 N-linked (GlcNAc...) asparagine glycosylation sites follow: asparagine 297 and asparagine 352. Kazal-like domains are found at residues 627–673 (TFTG…PCIS), 698–752 (TFDK…PCQP), and 753–789 (FCRA…PCQA). Disulfide bonds link cysteine 633–cysteine 658, cysteine 635–cysteine 654, cysteine 643–cysteine 671, cysteine 716–cysteine 735, cysteine 724–cysteine 750, and cysteine 761–cysteine 787. A Kazal-like 2; degenerate domain is found at 704-750 (CSQYECVPRQLTCDQARDPVCDTDHMEHSNLCTLYQRGKSLSYRGPC). Serine 942 is lipidated: GPI-anchor amidated serine. Positions 943 to 971 (SAVVGRPLFHSLLLLLSLGLTVHLLWTRP) are cleaved as a propeptide — removed in mature form.

It belongs to the RECK family. In terms of assembly, interacts (via knot repeats) with WNT7A (via disordered linker region); the interaction is direct. Interacts (via knot repeats) with WNT7B (via disordered linker region); the interaction is direct. Interacts with ADGRA2; the interaction is direct. Interacts with MMP9.

It is found in the cell membrane. Functionally, functions together with ADGRA2 to enable brain endothelial cells to selectively respond to Wnt7 signals (WNT7A or WNT7B). Plays a key role in Wnt7-specific responses: required for central nervous system (CNS) angiogenesis and blood-brain barrier regulation. Acts as a Wnt7-specific coactivator of canonical Wnt signaling by decoding Wnt ligands: acts by interacting specifically with the disordered linker region of Wnt7, thereby conferring ligand selectivity for Wnt7. ADGRA2 is then required to deliver RECK-bound Wnt7 to frizzled by assembling a higher-order RECK-ADGRA2-Fzd-LRP5-LRP6 complex. Also acts as a serine protease inhibitor: negatively regulates matrix metalloproteinase-9 (MMP9) by suppressing MMP9 secretion and by direct inhibition of its enzymatic activity. Also inhibits metalloproteinase activity of MMP2 and MMP14 (MT1-MMP). The polypeptide is Reversion-inducing cysteine-rich protein with Kazal motifs (Mus musculus (Mouse)).